Here is a 422-residue protein sequence, read N- to C-terminus: Phosphoribosylamine--glycine ligase (422 aa).

The ATP-grasp domain maps to 107 to 313 (KDLMKKYDIP…LVQVLLDLLD (207 aa)). 133-194 (VQEKGAPIVI…EEYLSGEEFS (62 aa)) contributes to the ATP binding site. 2 residues coordinate Mg(2+): Glu283 and Asn285.

The protein belongs to the GARS family. Mg(2+) serves as cofactor. Mn(2+) is required as a cofactor.

It catalyses the reaction 5-phospho-beta-D-ribosylamine + glycine + ATP = N(1)-(5-phospho-beta-D-ribosyl)glycinamide + ADP + phosphate + H(+). It functions in the pathway purine metabolism; IMP biosynthesis via de novo pathway; N(1)-(5-phospho-D-ribosyl)glycinamide from 5-phospho-alpha-D-ribose 1-diphosphate: step 2/2. The sequence is that of Phosphoribosylamine--glycine ligase from Bacillus subtilis (strain 168).